The following is a 44-amino-acid chain: Photosystem I reaction center subunit IX (44 aa).

Residues 7–27 (YLSVAPVVSTLWFAALAGLLI) traverse the membrane as a helical segment.

It belongs to the PsaJ family.

It is found in the plastid. It localises to the chloroplast thylakoid membrane. May help in the organization of the PsaE and PsaF subunits. The chain is Photosystem I reaction center subunit IX from Lotus japonicus (Lotus corniculatus var. japonicus).